The sequence spans 340 residues: MGSTGKIKIGINGFGRIGRLVARVALQRDDIELVAVNDPFISTESLTSLFKYDSVHGQWKKHEVKVKDEKTLLFGEKHVAVFGCRNPEEIPWGEVGAEYVVESTGVFTDKDKAAAHLKGGAKKVVISAPSKDAPMFVVGVNEHEYKSDLTIVSNASCTTNCLAPLAKVINDRFGIVEGLMTTVHSITATQKTVDGPSNKDWRGGRAAGFNIIPSSTGAAKAVGKVLPVLNGKLTGMCFRVPTQDVSVVDLTVKLEKSATYGEIKAAIKEESEGKLKGILGYTEDDVVSTDFIGDSRSSIFDAKAGIALNDNFVKLVSWYDNEWGYSSRVIDLIVHMDSTA.

NAD(+)-binding positions include 16–17 (RI), aspartate 38, and arginine 85. Residues 156–158 (SCT), threonine 187, 216–217 (TG), and arginine 239 each bind D-glyceraldehyde 3-phosphate. The active-site Nucleophile is cysteine 157. Asparagine 321 is a binding site for NAD(+).

Belongs to the glyceraldehyde-3-phosphate dehydrogenase family. As to quaternary structure, homotetramer.

It localises to the cytoplasm. It carries out the reaction D-glyceraldehyde 3-phosphate + phosphate + NAD(+) = (2R)-3-phospho-glyceroyl phosphate + NADH + H(+). Its pathway is carbohydrate degradation; glycolysis; pyruvate from D-glyceraldehyde 3-phosphate: step 1/5. Its function is as follows. Key enzyme in glycolysis that catalyzes the first step of the pathway by converting D-glyceraldehyde 3-phosphate (G3P) into 3-phospho-D-glyceroyl phosphate. Essential for the maintenance of cellular ATP levels and carbohydrate metabolism. This Taxus baccata (English yew) protein is Glyceraldehyde-3-phosphate dehydrogenase, cytosolic.